We begin with the raw amino-acid sequence, 344 residues long: Glyceraldehyde-3-phosphate dehydrogenase (344 aa).

Residues 11-12 (TI) and G110 contribute to the NAD(+) site. D-glyceraldehyde 3-phosphate is bound at residue 139 to 141 (SCN). The active-site Nucleophile is the C140. Residue R169 coordinates NAD(+). A D-glyceraldehyde 3-phosphate-binding site is contributed by 195–196 (HG). NAD(+) is bound at residue Q302.

Belongs to the glyceraldehyde-3-phosphate dehydrogenase family. In terms of assembly, homotetramer.

The protein localises to the cytoplasm. It carries out the reaction D-glyceraldehyde 3-phosphate + phosphate + NADP(+) = (2R)-3-phospho-glyceroyl phosphate + NADPH + H(+). It catalyses the reaction D-glyceraldehyde 3-phosphate + phosphate + NAD(+) = (2R)-3-phospho-glyceroyl phosphate + NADH + H(+). The protein operates within carbohydrate degradation; glycolysis; pyruvate from D-glyceraldehyde 3-phosphate: step 1/5. The sequence is that of Glyceraldehyde-3-phosphate dehydrogenase from Pyrobaculum neutrophilum (strain DSM 2338 / JCM 9278 / NBRC 100436 / V24Sta) (Thermoproteus neutrophilus).